The sequence spans 506 residues: Glutamate--tRNA ligase (506 aa).

The 'HIGH' region signature appears at 12–22; sequence PSPTGDPHVGT. The 'KMSKS' region signature appears at 253 to 257; the sequence is KLSKR. Lys-256 serves as a coordination point for ATP.

This sequence belongs to the class-I aminoacyl-tRNA synthetase family. Glutamate--tRNA ligase type 1 subfamily. As to quaternary structure, monomer.

The protein localises to the cytoplasm. It carries out the reaction tRNA(Glu) + L-glutamate + ATP = L-glutamyl-tRNA(Glu) + AMP + diphosphate. In terms of biological role, catalyzes the attachment of glutamate to tRNA(Glu) in a two-step reaction: glutamate is first activated by ATP to form Glu-AMP and then transferred to the acceptor end of tRNA(Glu). The chain is Glutamate--tRNA ligase from Chlamydia trachomatis serovar A (strain ATCC VR-571B / DSM 19440 / HAR-13).